The primary structure comprises 275 residues: Translation initiation factor 2 subunit alpha (275 aa).

In terms of domain architecture, S1 motif spans 12-83 (GEFVIATVKS…NKGHIDLSLK (72 aa)).

Belongs to the eIF-2-alpha family. As to quaternary structure, heterotrimer composed of an alpha, a beta and a gamma chain.

Its function is as follows. eIF-2 functions in the early steps of protein synthesis by forming a ternary complex with GTP and initiator tRNA. In Thermococcus onnurineus (strain NA1), this protein is Translation initiation factor 2 subunit alpha.